The primary structure comprises 367 residues: Ribosomal RNA large subunit methyltransferase M (367 aa).

Residues S189, 222–225, D241, D261, and D278 each bind S-adenosyl-L-methionine; that span reads CPGG. K307 acts as the Proton acceptor in catalysis.

This sequence belongs to the class I-like SAM-binding methyltransferase superfamily. RNA methyltransferase RlmE family. RlmM subfamily. In terms of assembly, monomer.

The protein resides in the cytoplasm. The catalysed reaction is cytidine(2498) in 23S rRNA + S-adenosyl-L-methionine = 2'-O-methylcytidine(2498) in 23S rRNA + S-adenosyl-L-homocysteine + H(+). Functionally, catalyzes the 2'-O-methylation at nucleotide C2498 in 23S rRNA. The sequence is that of Ribosomal RNA large subunit methyltransferase M from Shewanella denitrificans (strain OS217 / ATCC BAA-1090 / DSM 15013).